The sequence spans 130 residues: Ribosome-binding factor A (130 aa).

Belongs to the RbfA family. As to quaternary structure, monomer. Binds 30S ribosomal subunits, but not 50S ribosomal subunits or 70S ribosomes.

Its subcellular location is the cytoplasm. Its function is as follows. One of several proteins that assist in the late maturation steps of the functional core of the 30S ribosomal subunit. Associates with free 30S ribosomal subunits (but not with 30S subunits that are part of 70S ribosomes or polysomes). Required for efficient processing of 16S rRNA. May interact with the 5'-terminal helix region of 16S rRNA. The chain is Ribosome-binding factor A from Alkalilimnicola ehrlichii (strain ATCC BAA-1101 / DSM 17681 / MLHE-1).